The chain runs to 331 residues: DSC E3 ubiquitin ligase complex subunit D (331 aa).

Asn-26 carries N-linked (GlcNAc...) asparagine glycosylation. 3 helical membrane-spanning segments follow: residues 63–83 (ILIY…ILFA), 107–127 (PFIG…NFFT), and 159–179 (LFLL…LIVE). The span at 197-214 (VQDHDSEERGVHRTRPES) shows a compositional bias: basic and acidic residues. Positions 197-225 (VQDHDSEERGVHRTRPESRSSVVGAELDE) are disordered.

As to quaternary structure, component of the DSC E3 ubiquitin ligase complex composed of dscA, dscB, dscC and dscD.

Its subcellular location is the endoplasmic reticulum membrane. Its pathway is protein modification; protein ubiquitination. Functionally, component of the DSC E3 ubiquitin ligase complex which is required for the srbA transcriptional activator proteolytic cleavage to release the soluble transcription factor from the membrane in low oxygen or sterol conditions. Required for growth during hypoxia and triazole drug susceptibility, as well as for virulence in a murine model of invasive pulmonary aspergillosis (IPA). This is DSC E3 ubiquitin ligase complex subunit D from Aspergillus fumigatus (strain CBS 144.89 / FGSC A1163 / CEA10) (Neosartorya fumigata).